We begin with the raw amino-acid sequence, 225 residues long: Probable proteasome subunit beta type-6 (225 aa).

It belongs to the peptidase T1B family. As to quaternary structure, the 26S proteasome consists of a 20S proteasome core and two 19S regulatory subunits. The 20S proteasome core is composed of 28 subunits that are arranged in four stacked rings, resulting in a barrel-shaped structure. The two end rings are each formed by seven alpha subunits, and the two central rings are each formed by seven beta subunits. The catalytic chamber with the active sites is on the inside of the barrel.

The protein localises to the cytoplasm. The protein resides in the nucleus. Its function is as follows. Non-catalytic component of the proteasome, a multicatalytic proteinase complex which is characterized by its ability to cleave peptides with Arg, Phe, Tyr, Leu, and Glu adjacent to the leaving group at neutral or slightly basic pH. The proteasome has an ATP-dependent proteolytic activity. This Schizosaccharomyces pombe (strain 972 / ATCC 24843) (Fission yeast) protein is Probable proteasome subunit beta type-6 (pam1).